Reading from the N-terminus, the 695-residue chain is uncharacterized protein (695 aa).

This is an uncharacterized protein from Xanthomonas campestris pv. campestris (strain B100).